The sequence spans 605 residues: Insulin-like growth factor-binding protein complex acid labile subunit (605 aa).

The first 27 residues, 1–27 (MALRKGGLALALLLLSWVALGPRSLEG), serve as a signal peptide directing secretion. Residues 32-74 (TPGEAEGPACPAACVCSYDDDADELSVFCSSRNLTRLPDGVPG) form the LRRNT domain. Disulfide bonds link Cys-41/Cys-47 and Cys-45/Cys-60. N-linked (GlcNAc...) asparagine glycans are attached at residues Asn-64, Asn-85, and Asn-96. 19 LRR repeats span residues 75–96 (GTQALWLDGNNLSSVPPAAFQN), 99–120 (SLGFLNLQGGQLGSLEPQALLG), 123–144 (NLCHLHLERNQLRSLALGTFAH), 147–168 (ALASLGLSNNRLSRLEDGLFEG), 171–192 (SLWDLNLGWNSLAVLPDAAFRG), 195–216 (SLRELVLAGNRLAYLQPALFSG), 219–240 (ELRELDLSRNALRAIKANVFVQ), 243–264 (RLQKLYLDRNLIAAVAPGAFLG), 267–288 (ALRWLDLSHNRVAGLLEDTFPG), 291–312 (GLRVLRLSHNAIASLRPRTFKD), 315–336 (FLEELQLGHNRIRQLAERSFEG), 339–360 (QLEVLTLDHNQLQEVKAGAFLG), 363–384 (NVAVMNLSGNCLRNLPEQVFRG), 387–408 (KLHSLHLEGSCLGRIRPHTFTG), 411–432 (GLRRLFLKDNGLVGIEEQSLWG), 435–456 (ELLELDLTSNQLTHLPHRLFQG), 459–480 (KLEYLLLSRNRLAELPADALGP), 483–504 (RAFWLDVSHNRLEALPNSLLAP), and 507–528 (RLRYLSLRNNSLRTFTPQPPGL). Asn-368 carries N-linked (GlcNAc...) asparagine glycosylation. Asn-515 carries an N-linked (GlcNAc...) asparagine glycan. In terms of domain architecture, LRRCT spans 536-605 (NPWDCGCPLK…DLSEAHFAPC (70 aa)). Cystine bridges form between Cys-540/Cys-583, Cys-542/Cys-605, and Cys-566/Cys-571. The N-linked (GlcNAc...) asparagine glycan is linked to Asn-580.

Forms a ternary complex with IGF1 and IGFBP3. As to expression, plasma.

The protein localises to the secreted. Its subcellular location is the extracellular space. Functionally, involved in protein-protein interactions that result in protein complexes, receptor-ligand binding or cell adhesion. This Homo sapiens (Human) protein is Insulin-like growth factor-binding protein complex acid labile subunit (IGFALS).